The primary structure comprises 157 residues: Small ribosomal subunit protein uS9 (157 aa).

This sequence belongs to the universal ribosomal protein uS9 family.

In Caulobacter vibrioides (strain ATCC 19089 / CIP 103742 / CB 15) (Caulobacter crescentus), this protein is Small ribosomal subunit protein uS9.